Here is a 41-residue protein sequence, read N- to C-terminus: Large ribosomal subunit protein bL36 (41 aa).

The protein belongs to the bacterial ribosomal protein bL36 family.

This Sphingopyxis alaskensis (strain DSM 13593 / LMG 18877 / RB2256) (Sphingomonas alaskensis) protein is Large ribosomal subunit protein bL36.